A 121-amino-acid polypeptide reads, in one-letter code: Large ribosomal subunit protein bL19 (121 aa).

This sequence belongs to the bacterial ribosomal protein bL19 family.

In terms of biological role, this protein is located at the 30S-50S ribosomal subunit interface and may play a role in the structure and function of the aminoacyl-tRNA binding site. This Chlamydia pneumoniae (Chlamydophila pneumoniae) protein is Large ribosomal subunit protein bL19 (rplS).